A 491-amino-acid chain; its full sequence is MRSAAAALSVCVLAVLLHWICWTDRSAELLGFRAADRPKADVREVLVGVLSARHNHELRQAIRDTWLGYLKQHPHFQNRVLVKFIIGAQGCSVPLEDLEDQYSCSQLELSEAAVSGQEMAILSVPDSSALLQSDVPVLSLDFKVLHSVVITQLGVFPNKPPHYLKGNITVRLLQVDQEEAVISARFSSVSPGTAADGMFYKPVEQFILPKGFEGTLLWEAEDSTALMSVNTSALRLNNGGGVLHFRSIEEGTLPHRNALGFPGLAGGFTFTVYDVEVLSEMLRGRSGRQKIREAQLKGEDEALQEESLRHGDMVFVDVVGTYRNVPSKLLQFYKWSVENADFSLLLKTDDDCFIDVDAVLMKMQRRRLTHTSLWWGNFRQNWAVDRVGKWQELEYASPAYPAFACGSGYVVSRDLVQWLASNAQHLKAYQGEDVSMGIWMAAVGPRKYQDSGWLCEKECYVDMLSSPQHSAEELRLLWSRKNKCGDPCGCS.

Over 1–2 (MR) the chain is Cytoplasmic. A helical; Signal-anchor for type II membrane protein transmembrane segment spans residues 3 to 23 (SAAAALSVCVLAVLLHWICWT). At 24 to 491 (DRSAELLGFR…NKCGDPCGCS (468 aa)) the chain is on the lumenal side. Asparagine 167 and asparagine 230 each carry an N-linked (GlcNAc...) asparagine glycan.

Belongs to the glycosyltransferase 31 family.

The protein localises to the golgi apparatus membrane. The protein resides in the endoplasmic reticulum. The enzyme catalyses 3-O-(N-acetyl-beta-D-glucosaminyl-(1-&gt;4)-alpha-D-mannosyl)-L-threonyl-[protein] + UDP-N-acetyl-alpha-D-galactosamine = 3-O-[beta-D-GalNAc-(1-&gt;3)-beta-D-GlcNAc-(1-&gt;4)-alpha-D-Man]-L-Thr-[protein] + UDP + H(+). It functions in the pathway protein modification; protein glycosylation. Beta-1,3-N-acetylgalactosaminyltransferase that synthesizes a unique carbohydrate structure, GalNAc-beta-1-3GlcNAc, on N- and O-glycans. Has no galactose nor galactosaminyl transferase activity toward any acceptor substrate. Involved in alpha-dystroglycan (dag1) glycosylation. This Danio rerio (Zebrafish) protein is UDP-GalNAc:beta-1,3-N-acetylgalactosaminyltransferase 2 (b3galnt2).